Reading from the N-terminus, the 141-residue chain is Putative pre-16S rRNA nuclease (141 aa).

This sequence belongs to the YqgF nuclease family.

It is found in the cytoplasm. In terms of biological role, could be a nuclease involved in processing of the 5'-end of pre-16S rRNA. The protein is Putative pre-16S rRNA nuclease of Amoebophilus asiaticus (strain 5a2).